A 143-amino-acid polypeptide reads, in one-letter code: Large ribosomal subunit protein uL13 (143 aa).

This sequence belongs to the universal ribosomal protein uL13 family. As to quaternary structure, part of the 50S ribosomal subunit.

Functionally, this protein is one of the early assembly proteins of the 50S ribosomal subunit, although it is not seen to bind rRNA by itself. It is important during the early stages of 50S assembly. This is Large ribosomal subunit protein uL13 from Symbiobacterium thermophilum (strain DSM 24528 / JCM 14929 / IAM 14863 / T).